Here is a 108-residue protein sequence, read N- to C-terminus: MGVTVKQLQPGDGKTYPKKGDAVTIHYVGTLENGQKFDSSRDRGEPFKTTIGVGDVIRGWDEGVPKLSLGERSVLTISGDYGYGERGFPGLIPPNATLVFDVELLGIN.

Residues 20–108 (GDAVTIHYVG…VFDVELLGIN (89 aa)) form the PPIase FKBP-type domain.

The protein belongs to the FKBP-type PPIase family. FKBP1 subfamily.

It localises to the cytoplasm. It carries out the reaction [protein]-peptidylproline (omega=180) = [protein]-peptidylproline (omega=0). Its activity is regulated as follows. Inhibited by both FK506 and rapamycin. Functionally, PPIases accelerate the folding of proteins. It catalyzes the cis-trans isomerization of proline imidic peptide bonds in oligopeptides. The protein is FK506-binding protein 1 (FPR1) of Yarrowia lipolytica (strain CLIB 122 / E 150) (Yeast).